The sequence spans 469 residues: Protein HEAT STRESS TOLERANT DWD 1 (469 aa).

Over residues 1–15 (MGRNVKTKAKRKNKK) the composition is skewed to basic residues. 2 disordered regions span residues 1-29 (MGRNVKTKAKRKNKKKAEASSSEIPSIPT) and 115-150 (DVVPKTFGNGEDEDEDDEDDSDSDDDDGDEASKTPN). The segment covering 124–143 (GEDEDEDDEDDSDSDDDDGD) has biased composition (acidic residues). WD repeat units follow at residues 157–197 (AHHG…NALA), 221–261 (GHKD…WAVD), 267–307 (GHTA…SPAL), 311–351 (AHNA…GGDA), 358–398 (YHKH…DEEE), and 425–464 (QGQKDLKELHWHNQIPGMIISTAGDGFNILMPYNIQNTLP).

Belongs to the WD repeat RBAP46/RBAP48/MSI1 family. As to quaternary structure, probable component of CULLIN4 (CUL4) RING ligase (CRL4) complexes. Interacts with DDB1A and DDB1B. Associates with HSP90-1.

It functions in the pathway protein modification; protein ubiquitination. Functionally, probable substrate receptor of CRL4 E3 ligase complexes acting as negative regulators of thermotolerance by disturbing the action of HSP90-1 and by preventing the expression of heat-inducible genes (e.g. HSP14.7, HSP21, At2g03020 and WRKY28). The sequence is that of Protein HEAT STRESS TOLERANT DWD 1 from Arabidopsis thaliana (Mouse-ear cress).